The chain runs to 573 residues: MRTENTATLNLIWGALILEELARLGVQHVCMAPGSRSTPLTLAAAQQTKLQRHLHFDERGLGFMALGLAKASRAPVAIITTSGTAVANLYPAIVEAWLTHVPLIVLSGDRPPELLGCGANQAIVQPGIFANYATQVNLPTPDAHIAPQALLTTVDEAVANQTRPVHINCMYREPLYPSELSGVILDAESPYLKPLQTWLQLARPYTQYGKSKQLSSPSDDAIMRFVHGKGVIVVGTLTPEQDPQQLIALSQKIGWPLLTDAQSQLRQHPAAIGNIDQLLQHPKARNLLQEADRVLVFGGRLLSKRVIGYLAEQNWHSYWQVLPEQDRLDPSHNAKHIWHANAEQFAALNWYRSSSANWANTLITYNDELHNLFVRNIDQGEFGEAQVIRAIANTRPLEQQLFIGNSLPVRLYDMYAPVSCCTATTYTNRGASGIDGLLATACGIAAHEGKPTSLIIGDLSQLHDLNSLAIAKGLSSPLVIVILNNDGGNIFNLLPVPNEQVRSEYYRLSHGLEFGYAAAMFNLPYNQVDNLADFQDSYNEALDFQGASIIEVNVSQNQASDQIAALNLWVKQS.

Belongs to the TPP enzyme family. MenD subfamily. Homodimer. Mg(2+) is required as a cofactor. It depends on Mn(2+) as a cofactor. The cofactor is thiamine diphosphate.

The enzyme catalyses isochorismate + 2-oxoglutarate + H(+) = 5-enolpyruvoyl-6-hydroxy-2-succinyl-cyclohex-3-ene-1-carboxylate + CO2. It participates in quinol/quinone metabolism; 1,4-dihydroxy-2-naphthoate biosynthesis; 1,4-dihydroxy-2-naphthoate from chorismate: step 2/7. It functions in the pathway quinol/quinone metabolism; menaquinone biosynthesis. Catalyzes the thiamine diphosphate-dependent decarboxylation of 2-oxoglutarate and the subsequent addition of the resulting succinic semialdehyde-thiamine pyrophosphate anion to isochorismate to yield 2-succinyl-5-enolpyruvyl-6-hydroxy-3-cyclohexene-1-carboxylate (SEPHCHC). The polypeptide is 2-succinyl-5-enolpyruvyl-6-hydroxy-3-cyclohexene-1-carboxylate synthase (Shewanella baltica (strain OS155 / ATCC BAA-1091)).